The sequence spans 357 residues: Peptide chain release factor 1 (357 aa).

Gln232 carries the post-translational modification N5-methylglutamine. The span at 284–304 shows a compositional bias: basic and acidic residues; sequence AERAAERKGQIGSGDRSERIR. A disordered region spans residues 284-308; that stretch reads AERAAERKGQIGSGDRSERIRTYNY.

The protein belongs to the prokaryotic/mitochondrial release factor family. In terms of processing, methylated by PrmC. Methylation increases the termination efficiency of RF1.

It localises to the cytoplasm. Functionally, peptide chain release factor 1 directs the termination of translation in response to the peptide chain termination codons UAG and UAA. This Maricaulis maris (strain MCS10) (Caulobacter maris) protein is Peptide chain release factor 1.